Here is a 223-residue protein sequence, read N- to C-terminus: Ribose-5-phosphate isomerase A (223 aa).

Residues 28–31 (TGST), 81–84 (DGAD), and 94–97 (KGGG) contribute to the substrate site. The active-site Proton acceptor is Glu103. Substrate is bound at residue Lys121.

It belongs to the ribose 5-phosphate isomerase family. As to quaternary structure, homodimer.

It carries out the reaction aldehydo-D-ribose 5-phosphate = D-ribulose 5-phosphate. It functions in the pathway carbohydrate degradation; pentose phosphate pathway; D-ribose 5-phosphate from D-ribulose 5-phosphate (non-oxidative stage): step 1/1. Catalyzes the reversible conversion of ribose-5-phosphate to ribulose 5-phosphate. In Herminiimonas arsenicoxydans, this protein is Ribose-5-phosphate isomerase A.